The following is a 660-amino-acid chain: Bifunctional polymyxin resistance protein ArnA (660 aa).

Residues 1–304 (MKAVVFAYHN…EMYLVEGMRF (304 aa)) are formyltransferase ArnAFT. The Proton donor; for formyltransferase activity role is filled by His-104. Residues Arg-114 and 136–140 (TVKPD) each bind (6R)-10-formyltetrahydrofolate. The dehydrogenase ArnADH stretch occupies residues 316–660 (RRQKVLIMGA…FLKTAVEETK (345 aa)). NAD(+) is bound by residues Asp-349 and 370–371 (DI). Residues Ala-395, Tyr-400, and 434–435 (TS) contribute to the UDP-alpha-D-glucuronate site. Catalysis depends on Glu-436, which acts as the Proton acceptor; for decarboxylase activity. UDP-alpha-D-glucuronate-binding positions include Arg-462, Asn-494, 528 to 537 (KLIDGGEQKR), and Tyr-615. Arg-621 (proton donor; for decarboxylase activity) is an active-site residue.

In the N-terminal section; belongs to the Fmt family. UDP-L-Ara4N formyltransferase subfamily. This sequence in the C-terminal section; belongs to the NAD(P)-dependent epimerase/dehydratase family. UDP-glucuronic acid decarboxylase subfamily. Homohexamer, formed by a dimer of trimers.

It catalyses the reaction UDP-alpha-D-glucuronate + NAD(+) = UDP-beta-L-threo-pentopyranos-4-ulose + CO2 + NADH. The enzyme catalyses UDP-4-amino-4-deoxy-beta-L-arabinose + (6R)-10-formyltetrahydrofolate = UDP-4-deoxy-4-formamido-beta-L-arabinose + (6S)-5,6,7,8-tetrahydrofolate + H(+). It participates in nucleotide-sugar biosynthesis; UDP-4-deoxy-4-formamido-beta-L-arabinose biosynthesis; UDP-4-deoxy-4-formamido-beta-L-arabinose from UDP-alpha-D-glucuronate: step 1/3. It functions in the pathway nucleotide-sugar biosynthesis; UDP-4-deoxy-4-formamido-beta-L-arabinose biosynthesis; UDP-4-deoxy-4-formamido-beta-L-arabinose from UDP-alpha-D-glucuronate: step 3/3. The protein operates within bacterial outer membrane biogenesis; lipopolysaccharide biosynthesis. In terms of biological role, bifunctional enzyme that catalyzes the oxidative decarboxylation of UDP-glucuronic acid (UDP-GlcUA) to UDP-4-keto-arabinose (UDP-Ara4O) and the addition of a formyl group to UDP-4-amino-4-deoxy-L-arabinose (UDP-L-Ara4N) to form UDP-L-4-formamido-arabinose (UDP-L-Ara4FN). The modified arabinose is attached to lipid A and is required for resistance to polymyxin and cationic antimicrobial peptides. This Shewanella sediminis (strain HAW-EB3) protein is Bifunctional polymyxin resistance protein ArnA.